The sequence spans 162 residues: Auxin-responsive protein SAUR36 (162 aa).

The protein belongs to the ARG7 family. As to expression, expressed in embryo, endosperm, growing hypocotyls and shoot apical meristems.

Acts a positive regulator of leaf senescence and may mediate auxin-induced leaf senescence. Plays a role in the regulation of seed germination by gibberellins and abscisic acid (ABA). Plays a role in the regulation of light-dependent hypocotyl elongation. The sequence is that of Auxin-responsive protein SAUR36 from Arabidopsis thaliana (Mouse-ear cress).